We begin with the raw amino-acid sequence, 341 residues long: 5-formaminoimidazole-4-carboxamide-1-(beta)-D-ribofuranosyl 5'-monophosphate synthetase (341 aa).

His10 and Thr77 together coordinate 5-amino-1-(5-phospho-beta-D-ribosyl)imidazole-4-carboxamide. In terms of domain architecture, ATP-grasp spans Asp106–Met317. Residues Glu132 to Tyr188 and Glu210 contribute to the ATP site. Asn238 serves as a coordination point for 5-amino-1-(5-phospho-beta-D-ribosyl)imidazole-4-carboxamide. Mg(2+) contacts are provided by Glu277 and Glu290.

The protein belongs to the phosphohexose mutase family. Requires Mg(2+) as cofactor. The cofactor is Mn(2+).

The enzyme catalyses 5-amino-1-(5-phospho-beta-D-ribosyl)imidazole-4-carboxamide + formate + ATP = 5-formamido-1-(5-phospho-D-ribosyl)imidazole-4-carboxamide + ADP + phosphate. The protein operates within purine metabolism; IMP biosynthesis via de novo pathway; 5-formamido-1-(5-phospho-D-ribosyl)imidazole-4-carboxamide from 5-amino-1-(5-phospho-D-ribosyl)imidazole-4-carboxamide (formate route): step 1/1. In terms of biological role, catalyzes the ATP- and formate-dependent formylation of 5-aminoimidazole-4-carboxamide-1-beta-d-ribofuranosyl 5'-monophosphate (AICAR) to 5-formaminoimidazole-4-carboxamide-1-beta-d-ribofuranosyl 5'-monophosphate (FAICAR) in the absence of folates. The protein is 5-formaminoimidazole-4-carboxamide-1-(beta)-D-ribofuranosyl 5'-monophosphate synthetase of Nitrosopumilus maritimus (strain SCM1).